Here is a 395-residue protein sequence, read N- to C-terminus: Putative gustatory receptor 93b (395 aa).

Topologically, residues 1–18 are cytoplasmic; the sequence is MSGLLVMPRILRCLNVSR. A helical membrane pass occupies residues 19-39; sequence ISAILLRSCFLYGTFFGVITF. Topologically, residues 40 to 89 are extracellular; that stretch reads RIERKDSQLVAINRRGYLWICLVIRLLASCFYGYSYDAWSGQYEDMYLRA. A helical membrane pass occupies residues 90 to 110; sequence FFGFRLIGCLICSVIILVMQF. Over 111–153 the chain is Cytoplasmic; the sequence is WFGEELINLVNRFLQLFRRMQSLTNSPKNRFGDRAEFLLMFSK. A helical transmembrane segment spans residues 154–174; sequence VFSLLFVFMAFRLMLSPWFLL. The Extracellular portion of the chain corresponds to 175-183; the sequence is TLVCDLYTS. A helical membrane pass occupies residues 184–204; sequence VGTGMITHLCFVGYLSIGVLY. Residues 205-267 lie on the Cytoplasmic side of the membrane; sequence RDLNNYVDCQ…RSFQQLFDLP (63 aa). The helical transmembrane segment at 268–288 threads the bilayer; the sequence is LFLSLAQSLLAMSMVSYHAIL. Residues 289 to 293 lie on the Extracellular side of the membrane; sequence RRQYS. The helical transmembrane segment at 294–314 threads the bilayer; that stretch reads FNLWGLVIKLLIDVVLLTMSV. Residues 315-369 lie on the Cytoplasmic side of the membrane; the sequence is HSAVNGSRLIRRLSFENFYVTDSQSYHQKLELFLGRLQHQELRVFPLGLFEVSNE. A helical transmembrane segment spans residues 370-390; sequence LTLFFLSAMVTYLVFLVQYGM. Residues 391–395 are Extracellular-facing; that stretch reads QSQQI.

Belongs to the insect chemoreceptor superfamily. Gustatory receptor (GR) family. Gr93a subfamily. As to expression, in larvae, is expressed in neurons of the terminal external chemosensory organ and of the dorsal pharyngeal sense organ.

It is found in the cell membrane. In terms of biological role, probable gustatory receptor which mediates acceptance or avoidance behavior, depending on its substrates. This chain is Putative gustatory receptor 93b (Gr93b), found in Drosophila melanogaster (Fruit fly).